The chain runs to 21 residues: Nigrocin-2GRb (21 aa).

Expressed by the skin glands.

Its subcellular location is the secreted. In terms of biological role, antimicrobial peptide active against the Gram-positive bacterium S.aureus (MIC=12.5 uM) and against the Gram-negative bacteria E.coli (MIC=3 uM). Has antifungal activity against C.albicans (MIC=50 uM). Has some hemolytic activity against human erythrocytes (LC(50)=40 uM). This is Nigrocin-2GRb from Odorrana grahami (Yunnanfu frog).